Consider the following 348-residue polypeptide: Lipooligosaccharide heptosyltransferase 2 (348 aa).

The protein belongs to the glycosyltransferase 9 family.

It catalyses the reaction an L-alpha-D-Hep-(1-&gt;5)-[alpha-Kdo-(2-&gt;4)]-alpha-Kdo-(2-&gt;6)-lipid A + ADP-L-glycero-beta-D-manno-heptose = an L-alpha-D-Hep-(1-&gt;3)-L-alpha-D-Hep-(1-&gt;5)-[alpha-Kdo-(2-&gt;4)]-alpha-Kdo-(2-&gt;6)-lipid A + ADP + H(+). Its pathway is bacterial outer membrane biogenesis; LOS core biosynthesis. Its function is as follows. Glycosyltransferase involved in the biosynthesis of the core oligosaccharide region of lipooligosaccharide (LOS). Catalyzes the addition of a heptose unit to the heptosyl-Kdo2-lipid A module. In Haemophilus ducreyi (strain 35000HP / ATCC 700724), this protein is Lipooligosaccharide heptosyltransferase 2.